A 113-amino-acid polypeptide reads, in one-letter code: Retrotransposon Gag-like protein 8 (113 aa).

Belongs to the FAM127 family.

The chain is Retrotransposon Gag-like protein 8 (RTL8A) from Bos taurus (Bovine).